The primary structure comprises 150 residues: Large ribosomal subunit protein bL9 (150 aa).

It belongs to the bacterial ribosomal protein bL9 family.

Binds to the 23S rRNA. This is Large ribosomal subunit protein bL9 from Streptococcus equi subsp. zooepidemicus (strain MGCS10565).